The primary structure comprises 390 residues: NADH-quinone oxidoreductase subunit D (390 aa).

It belongs to the complex I 49 kDa subunit family. In terms of assembly, NDH-1 is composed of 14 different subunits. Subunits NuoB, C, D, E, F, and G constitute the peripheral sector of the complex.

The protein resides in the cell membrane. The catalysed reaction is a quinone + NADH + 5 H(+)(in) = a quinol + NAD(+) + 4 H(+)(out). Its function is as follows. NDH-1 shuttles electrons from NADH, via FMN and iron-sulfur (Fe-S) centers, to quinones in the respiratory chain. The immediate electron acceptor for the enzyme in this species is believed to be ubiquinone. Couples the redox reaction to proton translocation (for every two electrons transferred, four hydrogen ions are translocated across the cytoplasmic membrane), and thus conserves the redox energy in a proton gradient. This Wolbachia pipientis wMel protein is NADH-quinone oxidoreductase subunit D.